The chain runs to 607 residues: SNW/SKI-interacting protein A (607 aa).

Disordered stretches follow at residues 29–77 (ERYG…GGAF), 178–205 (AQPK…AAFN), 217–265 (EMAQ…IPPC), 327–434 (LQLK…DRDR), and 516–607 (KVMK…ERGR). Residues 35–49 (SAQSDAAAAAAKPSG) show a composition bias toward low complexity. Residues 190 to 353 (SKFIKYKPSQ…QKARMERTGA (164 aa)) are SNW. The segment covering 240–251 (PPVPVMHSPPRP) has biased composition (pro residues). Coiled coils occupy residues 313-349 (AREA…ARME) and 391-418 (EREA…LEAR). Composition is skewed to basic and acidic residues over residues 327–339 (LQLK…EQEL), 379–434 (EQPR…DRDR), 516–527 (KVMKTDRFKPDK), 535–550 (RSGK…KQEE), and 562–571 (EVKKGKKAVE).

The protein belongs to the SNW family. In terms of assembly, interacts with FLO6/SIP4. Interacts with DIS1. As to expression, widely expressed.

It is found in the nucleus. In terms of biological role, acts as a positive regulator of drought and salt tolerance. Acts as a positive regulator of cell viability. This is SNW/SKI-interacting protein A from Oryza sativa subsp. japonica (Rice).